Here is a 204-residue protein sequence, read N- to C-terminus: Tat proofreading chaperone DmsD (204 aa).

This sequence belongs to the TorD/DmsD family. DmsD subfamily. As to quaternary structure, monomer in solution.

Required for biogenesis/assembly of DMSO reductase, but not for the interaction of the DmsA signal peptide with the Tat system. May be part of a chaperone cascade complex that facilitates a folding-maturation pathway for the substrate protein. This is Tat proofreading chaperone DmsD from Salmonella typhimurium (strain LT2 / SGSC1412 / ATCC 700720).